A 154-amino-acid chain; its full sequence is Probable deoxyuridine 5'-triphosphate nucleotidohydrolase (154 aa).

The protein belongs to the dCTP deaminase family. Archaeal dUTPase subfamily.

It catalyses the reaction dUTP + H2O = dUMP + diphosphate + H(+). The protein operates within pyrimidine metabolism; dUMP biosynthesis; dUMP from dCTP (dUTP route): step 2/2. Functionally, this enzyme is involved in nucleotide metabolism: it produces dUMP, the immediate precursor of thymidine nucleotides and it decreases the intracellular concentration of dUTP so that uracil cannot be incorporated into DNA. This is Probable deoxyuridine 5'-triphosphate nucleotidohydrolase from Methanopyrus kandleri (strain AV19 / DSM 6324 / JCM 9639 / NBRC 100938).